The sequence spans 67 residues: Non-specific lipid-transfer protein 2 (67 aa).

4 cysteine pairs are disulfide-bonded: Cys-3–Cys-35, Cys-11–Cys-25, Cys-26–Cys-61, and Cys-37–Cys-67.

It belongs to the plant LTP family. Monomer. In terms of processing, disulfide bonds.

In terms of biological role, plant non-specific lipid-transfer proteins transfer phospholipids as well as galactolipids across membranes. May play a role in wax or cutin deposition in the cell walls of expanding epidermal cells and certain secretory tissues. The sequence is that of Non-specific lipid-transfer protein 2 from Apium graveolens var. rapaceum (Celeriac).